The primary structure comprises 313 residues: Sideroflexin-4 (313 aa).

5 helical membrane passes run 87–107 (AALL…VKSL), 141–161 (LLLG…PRLL), 175–191 (FIPV…NVIA), 230–247 (VVLF…AYFF), and 269–289 (VLVM…IGRI).

This sequence belongs to the sideroflexin family.

The protein localises to the mitochondrion inner membrane. Mitochondrial amino-acid transporter. Does not act as a serine transporter: not able to mediate transport of serine into mitochondria. This is Sideroflexin-4 from Bos taurus (Bovine).